A 61-amino-acid chain; its full sequence is Small ribosomal subunit protein uS14 (61 aa).

Residues cysteine 24, cysteine 27, cysteine 40, and cysteine 43 each coordinate Zn(2+).

The protein belongs to the universal ribosomal protein uS14 family. Zinc-binding uS14 subfamily. In terms of assembly, part of the 30S ribosomal subunit. Contacts proteins S3 and S10. It depends on Zn(2+) as a cofactor.

Its function is as follows. Binds 16S rRNA, required for the assembly of 30S particles and may also be responsible for determining the conformation of the 16S rRNA at the A site. The chain is Small ribosomal subunit protein uS14 from Rubrobacter xylanophilus (strain DSM 9941 / JCM 11954 / NBRC 16129 / PRD-1).